A 103-amino-acid chain; its full sequence is Large ribosomal subunit protein bL21 (103 aa).

It belongs to the bacterial ribosomal protein bL21 family. As to quaternary structure, part of the 50S ribosomal subunit. Contacts protein L20.

Functionally, this protein binds to 23S rRNA in the presence of protein L20. This Marinobacter nauticus (strain ATCC 700491 / DSM 11845 / VT8) (Marinobacter aquaeolei) protein is Large ribosomal subunit protein bL21.